Consider the following 80-residue polypeptide: Small ribosomal subunit protein bS21 (80 aa).

The protein belongs to the bacterial ribosomal protein bS21 family.

The sequence is that of Small ribosomal subunit protein bS21 from Rhodospirillum rubrum (strain ATCC 11170 / ATH 1.1.1 / DSM 467 / LMG 4362 / NCIMB 8255 / S1).